Reading from the N-terminus, the 354-residue chain is Protein RecA (354 aa).

67–74 (GPESSGKT) lines the ATP pocket. Positions 331-354 (GGANSSDSKTESDENIDLETGEVF) are disordered. The span at 343-354 (DENIDLETGEVF) shows a compositional bias: acidic residues.

Belongs to the RecA family.

It is found in the cytoplasm. Functionally, can catalyze the hydrolysis of ATP in the presence of single-stranded DNA, the ATP-dependent uptake of single-stranded DNA by duplex DNA, and the ATP-dependent hybridization of homologous single-stranded DNAs. It interacts with LexA causing its activation and leading to its autocatalytic cleavage. This is Protein RecA from Shewanella frigidimarina (strain NCIMB 400).